Here is a 512-residue protein sequence, read N- to C-terminus: Vacuolar protein sorting-associated protein 30 (512 aa).

Residues 294 to 511 (TNIYNESFRI…LVFCSSKLSL (218 aa)) form a BARA region.

It belongs to the beclin family. Component of the autophagy-specific VPS34 PI3-kinase complex I composed of VPS15, VPS30, VPS34, ATG14 and ATG38; and of the VPS34 PI3-kinase complex II composed of VPS15, VPS30, VPS34 and VPS38.

It localises to the endosome membrane. It is found in the vacuole membrane. The protein resides in the preautophagosomal structure membrane. Its function is as follows. Required for cytoplasm to vacuole transport (Cvt), autophagy, nucleophagy, and mitophagy, as a part of the autophagy-specific VPS34 PI3-kinase complex I. This complex is essential to recruit the ATG8-phosphatidylinositol conjugate and the ATG12-ATG5 conjugate to the pre-autophagosomal structure. Also involved in endosome-to-Golgi retrograde transport as part of the VPS34 PI3-kinase complex II. This second complex is required for the endosome-to-Golgi retrieval of PEP1 and KEX2, and the recruitment of VPS5 and VPS7, two components of the retromer complex, to endosomal membranes (probably through the synthesis of a specific pool of phosphatidylinositol 3-phosphate recruiting the retromer to the endosomes). Required for survival and/or proliferation in kidneys but not brain. The sequence is that of Vacuolar protein sorting-associated protein 30 from Candida glabrata (strain ATCC 2001 / BCRC 20586 / JCM 3761 / NBRC 0622 / NRRL Y-65 / CBS 138) (Yeast).